Reading from the N-terminus, the 264-residue chain is S-adenosylmethionine decarboxylase proenzyme (264 aa).

Residue S113 is the Schiff-base intermediate with substrate; via pyruvic acid of the active site. S113 carries the pyruvic acid (Ser); by autocatalysis modification. Residue H118 is the Proton acceptor; for processing activity of the active site. The active-site Proton donor; for catalytic activity is C141.

It belongs to the prokaryotic AdoMetDC family. Type 2 subfamily. Heterooctamer of four alpha and four beta chains arranged as a tetramer of alpha/beta heterodimers. Requires pyruvate as cofactor. In terms of processing, is synthesized initially as an inactive proenzyme. Formation of the active enzyme involves a self-maturation process in which the active site pyruvoyl group is generated from an internal serine residue via an autocatalytic post-translational modification. Two non-identical subunits are generated from the proenzyme in this reaction, and the pyruvate is formed at the N-terminus of the alpha chain, which is derived from the carboxyl end of the proenzyme. The post-translation cleavage follows an unusual pathway, termed non-hydrolytic serinolysis, in which the side chain hydroxyl group of the serine supplies its oxygen atom to form the C-terminus of the beta chain, while the remainder of the serine residue undergoes an oxidative deamination to produce ammonia and the pyruvoyl group blocking the N-terminus of the alpha chain.

It catalyses the reaction S-adenosyl-L-methionine + H(+) = S-adenosyl 3-(methylsulfanyl)propylamine + CO2. The protein operates within amine and polyamine biosynthesis; S-adenosylmethioninamine biosynthesis; S-adenosylmethioninamine from S-adenosyl-L-methionine: step 1/1. Functionally, catalyzes the decarboxylation of S-adenosylmethionine to S-adenosylmethioninamine (dcAdoMet), the propylamine donor required for the synthesis of the polyamines spermine and spermidine from the diamine putrescine. The chain is S-adenosylmethionine decarboxylase proenzyme from Pseudomonas syringae pv. syringae (strain B728a).